The primary structure comprises 363 residues: Mitochondrial RNA-splicing protein MRS1 (363 aa).

Homodimer. Forms a ribonucleoprotein complex composed of maturase bI3 and 2 dimers of MRS1 that assemble around the bI3 RNA.

It localises to the mitochondrion matrix. Functionally, function in mitochondrial RNA splicing in the excision of mitochondrial group I introns aI5 beta from COX1 and bI3 from COB transcripts and thus would be involved in obtaining the correct structure of the intron, to allow the RNA catalyzed reactions to occur. The chain is Mitochondrial RNA-splicing protein MRS1 (MRS1) from Saccharomyces cerevisiae (strain ATCC 204508 / S288c) (Baker's yeast).